We begin with the raw amino-acid sequence, 104 residues long: Large ribosomal subunit protein bL21 (104 aa).

Belongs to the bacterial ribosomal protein bL21 family. Part of the 50S ribosomal subunit. Contacts protein L20.

In terms of biological role, this protein binds to 23S rRNA in the presence of protein L20. The chain is Large ribosomal subunit protein bL21 from Pseudomonas putida (strain W619).